We begin with the raw amino-acid sequence, 189 residues long: Molybdopterin synthase catalytic subunit (189 aa).

Polar residues predominate over residues 1 to 30 (MSSLEISNSCFSPETRSPSSRQSVEDNASE). The tract at residues 1–41 (MSSLEISNSCFSPETRSPSSRQSVEDNASEPSGKDVDDVQE) is disordered. Position 20 is a phosphoserine (Ser-20). Residues 32–41 (SGKDVDDVQE) show a composition bias toward basic and acidic residues. Substrate is bound by residues 143–144 (HR), Lys-159, and 166–168 (KKE).

The protein belongs to the MoaE family. MOCS2B subfamily. Heterotetramer; composed of 2 small (MOCS2A) and 2 large (MOCS2B) subunits.

The protein localises to the cytoplasm. Its subcellular location is the cytosol. The catalysed reaction is 2 [molybdopterin-synthase sulfur-carrier protein]-C-terminal-Gly-aminoethanethioate + cyclic pyranopterin phosphate + H2O = molybdopterin + 2 [molybdopterin-synthase sulfur-carrier protein]-C-terminal Gly-Gly + 2 H(+). The protein operates within cofactor biosynthesis; molybdopterin biosynthesis. Functionally, catalytic subunit of the molybdopterin synthase complex, a complex that catalyzes the conversion of precursor Z into molybdopterin. Acts by mediating the incorporation of 2 sulfur atoms from thiocarboxylated MOCS2A into precursor Z to generate a dithiolene group. The sequence is that of Molybdopterin synthase catalytic subunit from Mus musculus (Mouse).